The primary structure comprises 32 residues: ilv operon leader peptide (32 aa).

Its function is as follows. This protein is involved in control of the biosynthesis of isoleucine, leucine, and valine. The chain is ilv operon leader peptide (ivbL) from Escherichia coli (strain K12).